A 322-amino-acid chain; its full sequence is Ribosomal RNA small subunit methyltransferase H (322 aa).

S-adenosyl-L-methionine contacts are provided by residues 35-37 (GGY), aspartate 52, phenylalanine 79, aspartate 100, and glutamine 107. The interval 254 to 322 (GATPAGSRHL…TAPKKEGRQG (69 aa)) is disordered. Residues 295 to 309 (SRSATLRVARRTAAA) are compositionally biased toward low complexity.

This sequence belongs to the methyltransferase superfamily. RsmH family.

Its subcellular location is the cytoplasm. It carries out the reaction cytidine(1402) in 16S rRNA + S-adenosyl-L-methionine = N(4)-methylcytidine(1402) in 16S rRNA + S-adenosyl-L-homocysteine + H(+). Specifically methylates the N4 position of cytidine in position 1402 (C1402) of 16S rRNA. This is Ribosomal RNA small subunit methyltransferase H from Rhizorhabdus wittichii (strain DSM 6014 / CCUG 31198 / JCM 15750 / NBRC 105917 / EY 4224 / RW1) (Sphingomonas wittichii).